Consider the following 234-residue polypeptide: 2,3-bisphosphoglycerate-dependent phosphoglycerate mutase 1 (234 aa).

Substrate contacts are provided by residues 14 to 21 (RHGQSIWN), 27 to 28 (TG), R66, and 93 to 96 (ERHY). Catalysis depends on H15, which acts as the Tele-phosphohistidine intermediate. The active-site Proton donor/acceptor is the E93.

Belongs to the phosphoglycerate mutase family. BPG-dependent PGAM subfamily. Homodimer.

The enzyme catalyses (2R)-2-phosphoglycerate = (2R)-3-phosphoglycerate. Its pathway is carbohydrate degradation; glycolysis; pyruvate from D-glyceraldehyde 3-phosphate: step 3/5. Functionally, catalyzes the interconversion of 2-phosphoglycerate and 3-phosphoglycerate. The polypeptide is 2,3-bisphosphoglycerate-dependent phosphoglycerate mutase 1 (Nitrosomonas europaea (strain ATCC 19718 / CIP 103999 / KCTC 2705 / NBRC 14298)).